The chain runs to 57 residues: Phospholipase A2 superbin b (57 aa).

Residues Tyr28, Gly30, and Gly32 each contribute to the Ca(2+) site. Residues Cys29 and Cys45 are joined by a disulfide bond. His48 is a catalytic residue. Asp49 is a binding site for Ca(2+).

The cofactor is Ca(2+). As to expression, expressed by the venom gland.

The protein resides in the secreted. It carries out the reaction a 1,2-diacyl-sn-glycero-3-phosphocholine + H2O = a 1-acyl-sn-glycero-3-phosphocholine + a fatty acid + H(+). In terms of biological role, snake venom phospholipase A2 (PLA2) that inhibits collagen-induced platelet aggregation. In terms of inhibition of platelet aggregation, superbin b is more potent as superbin c, and d. PLA2 catalyzes the calcium-dependent hydrolysis of the 2-acyl groups in 3-sn-phosphoglycerides. This is Phospholipase A2 superbin b from Austrelaps superbus (Lowland copperhead snake).